A 40-amino-acid chain; its full sequence is uncharacterized protein (40 aa).

Positions 1-17 are cleaved as a signal peptide; sequence MAVAALAMYGGTCGACA.

This is an uncharacterized protein from Archaeoglobus fulgidus (strain ATCC 49558 / DSM 4304 / JCM 9628 / NBRC 100126 / VC-16).